The following is a 94-amino-acid chain: Small ribosomal subunit protein uS17 (94 aa).

The segment at 1-22 (MASSSTEGQAAARGRKKSWTGK) is disordered.

It belongs to the universal ribosomal protein uS17 family. As to quaternary structure, part of the 30S ribosomal subunit.

Its function is as follows. One of the primary rRNA binding proteins, it binds specifically to the 5'-end of 16S ribosomal RNA. The chain is Small ribosomal subunit protein uS17 from Chlorobium luteolum (strain DSM 273 / BCRC 81028 / 2530) (Pelodictyon luteolum).